The chain runs to 348 residues: MLNPALEHIETYKVEGGQEAEVKLNQNENPFDLPSWLKDKILDQFRHEPWNRYPDILPYRGMAAYASFLGVKPELVIMSNGSNEMLYTIFMACLGAGRKVLIPEPSFSLYDKLARLQQAGVVEVPMHDDLSFDVDAIIEAARREKVDFIVLSTPNNPTSKSLSHDEIERIVEAADAIVLVDEAYVEFSREQSALDLIDRYPNLIVLRTMSKALALAGMRIGFAIANPELLAEISKPKIPFASSRLAEITLMAVLENYSLVTDAVQYILAERGRIEAELTEIPGIHTFESDTNFLIIRVANASEVFRKLKNAGVLVRNVSGYPLMENCLRFNVGLREENDRLLELLKKL.

An N6-(pyridoxal phosphate)lysine modification is found at K211.

This sequence belongs to the class-II pyridoxal-phosphate-dependent aminotransferase family. Histidinol-phosphate aminotransferase subfamily. In terms of assembly, homodimer. Pyridoxal 5'-phosphate is required as a cofactor.

The enzyme catalyses L-histidinol phosphate + 2-oxoglutarate = 3-(imidazol-4-yl)-2-oxopropyl phosphate + L-glutamate. The protein operates within amino-acid biosynthesis; L-histidine biosynthesis; L-histidine from 5-phospho-alpha-D-ribose 1-diphosphate: step 7/9. This Chlorobaculum tepidum (strain ATCC 49652 / DSM 12025 / NBRC 103806 / TLS) (Chlorobium tepidum) protein is Histidinol-phosphate aminotransferase.